The sequence spans 72 residues: Translation initiation factor IF-1 (72 aa).

Positions 1-72 (MSKDDSIEFE…TKGRITYRMK (72 aa)) constitute an S1-like domain.

This sequence belongs to the IF-1 family. As to quaternary structure, component of the 30S ribosomal translation pre-initiation complex which assembles on the 30S ribosome in the order IF-2 and IF-3, IF-1 and N-formylmethionyl-tRNA(fMet); mRNA recruitment can occur at any time during PIC assembly.

It localises to the cytoplasm. One of the essential components for the initiation of protein synthesis. Stabilizes the binding of IF-2 and IF-3 on the 30S subunit to which N-formylmethionyl-tRNA(fMet) subsequently binds. Helps modulate mRNA selection, yielding the 30S pre-initiation complex (PIC). Upon addition of the 50S ribosomal subunit IF-1, IF-2 and IF-3 are released leaving the mature 70S translation initiation complex. This chain is Translation initiation factor IF-1, found in Xanthomonas campestris pv. campestris (strain 8004).